The sequence spans 145 residues: Acidic phospholipase A2 1 (145 aa).

The first 21 residues, Met-1–Ala-21, serve as a signal peptide directing secretion. Residues Ile-22–Leu-27 constitute a propeptide that is removed on maturation. 7 cysteine pairs are disulfide-bonded: Cys-38-Cys-98, Cys-54-Cys-144, Cys-56-Cys-72, Cys-71-Cys-125, Cys-78-Cys-118, Cys-87-Cys-111, and Cys-105-Cys-116. Tyr-55, Gly-57, and Gly-59 together coordinate Ca(2+). His-75 is a catalytic residue. Asp-76 provides a ligand contact to Ca(2+). The active site involves Asp-119.

This sequence belongs to the phospholipase A2 family. Group I subfamily. D49 sub-subfamily. Monomer. Ca(2+) serves as cofactor. In terms of tissue distribution, expressed by the venom gland.

It is found in the secreted. It catalyses the reaction a 1,2-diacyl-sn-glycero-3-phosphocholine + H2O = a 1-acyl-sn-glycero-3-phosphocholine + a fatty acid + H(+). Its function is as follows. PLA2 catalyzes the calcium-dependent hydrolysis of the 2-acyl groups in 3-sn-phosphoglycerides. In Laticauda semifasciata (Black-banded sea krait), this protein is Acidic phospholipase A2 1.